The sequence spans 98 residues: MTALTKADMADHLSELTSLNRREAKQMVELFFDEISQALIAGEQVKLSGFGNFELRDKRERPGRNPKTGEEIPISARRVVTFRAGQKFRQRVGNEQID.

The protein belongs to the bacterial histone-like protein family. In terms of assembly, heterodimer of an alpha and a beta chain.

Functionally, this protein is one of the two subunits of integration host factor, a specific DNA-binding protein that functions in genetic recombination as well as in transcriptional and translational control. The chain is Integration host factor subunit alpha from Acinetobacter baumannii (strain AB307-0294).